The following is a 428-amino-acid chain: Phosphomethylpyrimidine synthase 2 (428 aa).

Substrate contacts are provided by residues Asn65, Met94, Tyr123, His158, 180 to 182, 221 to 224, and Glu260; these read SRG and DGMR. Position 264 (His264) interacts with Zn(2+). Tyr287 provides a ligand contact to substrate. His328 provides a ligand contact to Zn(2+). Positions 405, 408, and 412 each coordinate [4Fe-4S] cluster.

It belongs to the ThiC family. Requires [4Fe-4S] cluster as cofactor.

The catalysed reaction is 5-amino-1-(5-phospho-beta-D-ribosyl)imidazole + S-adenosyl-L-methionine = 4-amino-2-methyl-5-(phosphooxymethyl)pyrimidine + CO + 5'-deoxyadenosine + formate + L-methionine + 3 H(+). Its pathway is cofactor biosynthesis; thiamine diphosphate biosynthesis. Catalyzes the synthesis of the hydroxymethylpyrimidine phosphate (HMP-P) moiety of thiamine from aminoimidazole ribotide (AIR) in a radical S-adenosyl-L-methionine (SAM)-dependent reaction. The polypeptide is Phosphomethylpyrimidine synthase 2 (Methanosarcina barkeri (strain Fusaro / DSM 804)).